Here is a 247-residue protein sequence, read N- to C-terminus: tRNA pseudouridine synthase A (247 aa).

Residue Asp57 is the Nucleophile of the active site. Substrate is bound at residue Tyr115.

This sequence belongs to the tRNA pseudouridine synthase TruA family. As to quaternary structure, homodimer.

It carries out the reaction uridine(38/39/40) in tRNA = pseudouridine(38/39/40) in tRNA. Its function is as follows. Formation of pseudouridine at positions 38, 39 and 40 in the anticodon stem and loop of transfer RNAs. This is tRNA pseudouridine synthase A from Chlorobaculum tepidum (strain ATCC 49652 / DSM 12025 / NBRC 103806 / TLS) (Chlorobium tepidum).